A 233-amino-acid chain; its full sequence is Enolase-phosphatase E1 (233 aa).

2 residues coordinate Mg(2+): aspartate 16 and glutamate 18. Substrate contacts are provided by residues 131–132 (SS) and lysine 167. Aspartate 193 contributes to the Mg(2+) binding site.

The protein belongs to the HAD-like hydrolase superfamily. MasA/MtnC family. As to quaternary structure, monomer. The cofactor is Mg(2+).

The protein resides in the cytoplasm. It localises to the nucleus. It carries out the reaction 5-methylsulfanyl-2,3-dioxopentyl phosphate + H2O = 1,2-dihydroxy-5-(methylsulfanyl)pent-1-en-3-one + phosphate. It participates in amino-acid biosynthesis; L-methionine biosynthesis via salvage pathway; L-methionine from S-methyl-5-thio-alpha-D-ribose 1-phosphate: step 3/6. The protein operates within amino-acid biosynthesis; L-methionine biosynthesis via salvage pathway; L-methionine from S-methyl-5-thio-alpha-D-ribose 1-phosphate: step 4/6. Its function is as follows. Bifunctional enzyme that catalyzes the enolization of 2,3-diketo-5-methylthiopentyl-1-phosphate (DK-MTP-1-P) into the intermediate 2-hydroxy-3-keto-5-methylthiopentenyl-1-phosphate (HK-MTPenyl-1-P), which is then dephosphorylated to form the acireductone 1,2-dihydroxy-3-keto-5-methylthiopentene (DHK-MTPene). In Meyerozyma guilliermondii (strain ATCC 6260 / CBS 566 / DSM 6381 / JCM 1539 / NBRC 10279 / NRRL Y-324) (Yeast), this protein is Enolase-phosphatase E1.